The chain runs to 1186 residues: Major DNA-binding protein (1186 aa).

A zinc finger spans residues 495–508 (CCLCSLDNRHSCAH). Positions 839–840 (FW) match the Required for filament formation motif. Positions 1160–1186 (RRRPLACSDLFGDAPAEKRNDLTLDML) are required for nuclear localization.

The protein belongs to the herpesviridae major DNA-binding protein family. Homooligomers. Forms double-helical filaments necessary for the formation of replication compartments within the host nucleus. Interacts with the origin-binding protein. Interacts with the helicase primase complex; this interaction stimulates primer synthesis activity of the helicase-primase complex. Interacts with the DNA polymerase. Interacts with the alkaline exonuclease; this interaction increases its nuclease processivity.

It is found in the host nucleus. Plays several crucial roles in viral infection. Participates in the opening of the viral DNA origin to initiate replication by interacting with the origin-binding protein. May disrupt loops, hairpins and other secondary structures present on ssDNA to reduce and eliminate pausing of viral DNA polymerase at specific sites during elongation. Promotes viral DNA recombination by performing strand-transfer, characterized by the ability to transfer a DNA strand from a linear duplex to a complementary single-stranded DNA circle. Can also catalyze the renaturation of complementary single strands. Additionally, reorganizes the host cell nucleus, leading to the formation of prereplicative sites and replication compartments. This process is driven by the protein which can form double-helical filaments in the absence of DNA. In Bovine herpesvirus 2 (strain BMV) (BoHV-2), this protein is Major DNA-binding protein.